The primary structure comprises 185 residues: Bcl-2-like protein 10 (185 aa).

Residues 76-95 (LSNDQEFNWGRLVMLLAFVG) carry the BH1 motif. The short motif at 138 to 149 (WLEAHGGWDGFC) is the BH2 element. A helical transmembrane segment spans residues 160–182 (FWRRLLIRAILSCFFATAIFYIW).

Belongs to the Bcl-2 family. Interacts with BAX. Interacts with BCL2, BCL2L1/BCLX. Interacts with APAF1. Interacts with ITPR1, ITPR2 and ITPR3; the interaction with ITPR1 is increased in the presence of AHCLY1. Interacts with AHCYL1. Interacts with HIP1R (via ENTH and I/LWEQ domains). Interacts with CASP9. Interacts with BCL2L11/BIM. Interacts with BIK. Interacts with UBQLN4. Interacts with NME2/NM23-H2. Interacts with and PMAIP1/NOXA. Interacts with TPX2. Interacts with UBQLN1; in the cytoplasm. Interacts (via BH1 domain) with BECN1. Requires Ca(2+) as cofactor. In terms of processing, monoubiquitinated by UBQLN1; results in stabilization of BCL2L10 protein abundance and in relocalization from mitochondria to cytoplasm. Expressed in oligodendroglial lineage cells.

Its subcellular location is the mitochondrion. It is found in the nucleus membrane. The protein resides in the endoplasmic reticulum. It localises to the cytoplasm. The protein localises to the cytoskeleton. Its subcellular location is the spindle. Promotes cell survival by suppressing apoptosis induced by BAX but not BAK. Increases binding of AHCYL1/IRBIT to ITPR1. Reduces ITPR1-mediated calcium release from the endoplasmic reticulum cooperatively with AHCYL1/IRBIT under normal cellular conditions. Under apoptotic stress conditions, dissociates from ITPR1 and is displaced from mitochondria-associated endoplasmic reticulum membranes, leading to increased Ca(2+) transfer to mitochondria which promotes apoptosis. Required for the correct formation of the microtubule organizing center during oocyte cell division, potentially via regulation of protein abundance and localization of other microtubule organizing center components such as AURKA and TPX2. The chain is Bcl-2-like protein 10 from Rattus norvegicus (Rat).